The following is a 315-amino-acid chain: Glutathione synthetase (315 aa).

The ATP-grasp domain occupies 125 to 310 (KLYTAWFADL…ITGMLMDAIE (186 aa)). 151 to 207 (WEKHGDIIMKPLDGMGGASIFRVKEGDPNIGVIAETLTELGNRYCMAQNYLPAIKDG) is a binding site for ATP. Mg(2+) contacts are provided by glutamate 281 and asparagine 283.

The protein belongs to the prokaryotic GSH synthase family. Requires Mg(2+) as cofactor. It depends on Mn(2+) as a cofactor.

The catalysed reaction is gamma-L-glutamyl-L-cysteine + glycine + ATP = glutathione + ADP + phosphate + H(+). It functions in the pathway sulfur metabolism; glutathione biosynthesis; glutathione from L-cysteine and L-glutamate: step 2/2. This Salmonella typhimurium (strain LT2 / SGSC1412 / ATCC 700720) protein is Glutathione synthetase.